The following is a 706-amino-acid chain: Methionine--tRNA ligase (706 aa).

The short motif at 13–23 is the 'HIGH' region element; that stretch reads PYANGNFHIGH. Residues Cys-144, Cys-147, Cys-157, and Cys-160 each coordinate Zn(2+). Positions 341–345 match the 'KMSKS' region motif; the sequence is KMSKS. Residue Lys-344 coordinates ATP. One can recognise a tRNA-binding domain in the interval 600-706; the sequence is DFAKIDLRIA…PGATPGMRVR (107 aa).

It belongs to the class-I aminoacyl-tRNA synthetase family. MetG type 1 subfamily. As to quaternary structure, homodimer. The cofactor is Zn(2+).

The protein resides in the cytoplasm. The catalysed reaction is tRNA(Met) + L-methionine + ATP = L-methionyl-tRNA(Met) + AMP + diphosphate. Is required not only for elongation of protein synthesis but also for the initiation of all mRNA translation through initiator tRNA(fMet) aminoacylation. The polypeptide is Methionine--tRNA ligase (Paracidovorax citrulli (strain AAC00-1) (Acidovorax citrulli)).